The following is a 249-amino-acid chain: uncharacterized protein (249 aa).

The protein belongs to the ycf73 family.

It is found in the plastid. The protein localises to the chloroplast. This is an uncharacterized protein from Oryza sativa (Rice).